The primary structure comprises 279 residues: Diaminopimelate epimerase (279 aa).

Substrate-binding residues include Asn11 and Asn63. Cys72 serves as the catalytic Proton donor. Residues 73–74 (GN), Asn161, Asn194, and 212–213 (ER) each bind substrate. Cys221 (proton acceptor) is an active-site residue. 222–223 (GT) lines the substrate pocket.

This sequence belongs to the diaminopimelate epimerase family. In terms of assembly, homodimer.

The protein resides in the cytoplasm. The catalysed reaction is (2S,6S)-2,6-diaminopimelate = meso-2,6-diaminopimelate. It functions in the pathway amino-acid biosynthesis; L-lysine biosynthesis via DAP pathway; DL-2,6-diaminopimelate from LL-2,6-diaminopimelate: step 1/1. In terms of biological role, catalyzes the stereoinversion of LL-2,6-diaminopimelate (L,L-DAP) to meso-diaminopimelate (meso-DAP), a precursor of L-lysine and an essential component of the bacterial peptidoglycan. The sequence is that of Diaminopimelate epimerase from Moorella thermoacetica (strain ATCC 39073 / JCM 9320).